A 182-amino-acid chain; its full sequence is Adenylate kinase (182 aa).

12 to 17 (GAGKGT) is an ATP binding site. Positions 32–61 (STGDLLRTEVGAKTPLGQEAAAVMNRGELV) are NMP. AMP contacts are provided by residues Thr-33, Arg-38, 59–61 (ELV), 85–88 (GFPR), and Gln-92. The LID stretch occupies residues 126-132 (SRGRSDD). An ATP-binding site is contributed by Arg-127. The AMP site is built by Arg-129 and Arg-140. Gly-168 contacts ATP.

This sequence belongs to the adenylate kinase family. Monomer.

Its subcellular location is the cytoplasm. It catalyses the reaction AMP + ATP = 2 ADP. Its pathway is purine metabolism; AMP biosynthesis via salvage pathway; AMP from ADP: step 1/1. Functionally, catalyzes the reversible transfer of the terminal phosphate group between ATP and AMP. Plays an important role in cellular energy homeostasis and in adenine nucleotide metabolism. This chain is Adenylate kinase, found in Prochlorococcus marinus (strain MIT 9313).